Reading from the N-terminus, the 176-residue chain is Tumor necrosis factor receptor superfamily member 23 (176 aa).

An N-terminal signal peptide occupies residues 1-29 (MVTFSHVSSLSHWFLLLLLLNLFLPVIFA). 3 TNFR-Cys repeats span residues 37-72 (NCPDGEYQSNDVCCKTCPSGTFVKAPCKIPHTQGQC), 74-114 (KCHP…DRKC), and 115-155 (ECQI…NTVC). 9 disulfides stabilise this stretch: Cys-38–Cys-49, Cys-50–Cys-63, Cys-53–Cys-72, Cys-75–Cys-90, Cys-93–Cys-106, Cys-96–Cys-114, Cys-116–Cys-131, Cys-134–Cys-147, and Cys-137–Cys-155. Asn-148 carries an N-linked (GlcNAc...) asparagine glycan. Cys-155 carries the GPI-anchor amidated cysteine lipid modification. The propeptide at 156 to 176 (SSSVSNPRNWLFLLMLIVFCI) is removed in mature form.

As to expression, ubiquitous.

Its subcellular location is the cell membrane. In terms of biological role, receptor for the cytotoxic ligand TRAIL. Lacks a cytoplasmic death domain and hence is not capable of inducing apoptosis. May protect cells against TRAIL mediated apoptosis through ligand competition. Cannot induce the NF-kappa-B pathway. The polypeptide is Tumor necrosis factor receptor superfamily member 23 (Tnfrsf23) (Mus musculus (Mouse)).